A 201-amino-acid polypeptide reads, in one-letter code: MQPFTTHTGLAVMIDSTNIDTDQIIPKQFLSKVTRDGFGVHLFHDWRYLDDAGDQPNPEFSLNQSRYKGASILLAQENFGCGSSREHAPWALVDFGLRAIIAPSFADIFYGNSINNGLLPVALTHAQVRQLMDEVAAEAGAQITVDLTSCKVISPSGAEFSFTLAESARHKLLNGLDAIGLTLSHAAQISQYETQIQGWRR.

The protein belongs to the LeuD family. LeuD type 1 subfamily. Heterodimer of LeuC and LeuD.

The catalysed reaction is (2R,3S)-3-isopropylmalate = (2S)-2-isopropylmalate. It participates in amino-acid biosynthesis; L-leucine biosynthesis; L-leucine from 3-methyl-2-oxobutanoate: step 2/4. Functionally, catalyzes the isomerization between 2-isopropylmalate and 3-isopropylmalate, via the formation of 2-isopropylmaleate. This is 3-isopropylmalate dehydratase small subunit from Shewanella baltica (strain OS223).